Consider the following 166-residue polypeptide: Lipoprotein signal peptidase (166 aa).

Helical transmembrane passes span W12 to Q32, W70 to S90, and A102 to V122. Residues D123 and D141 contribute to the active site. A helical transmembrane segment spans residues F137–L157.

The protein belongs to the peptidase A8 family.

It is found in the cell inner membrane. The catalysed reaction is Release of signal peptides from bacterial membrane prolipoproteins. Hydrolyzes -Xaa-Yaa-Zaa-|-(S,diacylglyceryl)Cys-, in which Xaa is hydrophobic (preferably Leu), and Yaa (Ala or Ser) and Zaa (Gly or Ala) have small, neutral side chains.. The protein operates within protein modification; lipoprotein biosynthesis (signal peptide cleavage). In terms of biological role, this protein specifically catalyzes the removal of signal peptides from prolipoproteins. The sequence is that of Lipoprotein signal peptidase from Salmonella paratyphi A (strain ATCC 9150 / SARB42).